We begin with the raw amino-acid sequence, 108 residues long: Nucleoid-associated protein Bphy_0952 (108 aa).

The tract at residues 87-108 (AQEKMGGMTSGLPLPPGFKLPF) is disordered. Pro residues predominate over residues 99–108 (PLPPGFKLPF).

Belongs to the YbaB/EbfC family. As to quaternary structure, homodimer.

The protein localises to the cytoplasm. Its subcellular location is the nucleoid. Binds to DNA and alters its conformation. May be involved in regulation of gene expression, nucleoid organization and DNA protection. The protein is Nucleoid-associated protein Bphy_0952 of Paraburkholderia phymatum (strain DSM 17167 / CIP 108236 / LMG 21445 / STM815) (Burkholderia phymatum).